The following is a 310-amino-acid chain: MTELDEVDSLRSDGDSWTVTESVGATALGVAAARAVETAGANPLIRDEFAPILVSSAGPAWARLADPDIGWLDDDPHGQRLHRLGCDYQAVRTHFSDEYFAAAAGAGIEQAVILAAGLDCRAYRLNWPPEAVVFEIDQPKVLEYKAQILESHGVTAAATRHGVAVDLREDWPAALLRAGFDRDRPTAWLAEGLLPYLPGDAQDRLFEMITDLSAPRSRIAVESFTMNLTGNKQRWNRMRDRLGLDINVEALTYREPGRTDAAEWLANHGWQVYSVSNREEMARLGRPVPEDLVDEAITTTLLRASLEILR.

S-adenosyl-L-methionine is bound by residues aspartate 137 and 166 to 167 (DL).

The protein belongs to the UPF0677 family.

Exhibits S-adenosyl-L-methionine-dependent methyltransferase activity. This Mycobacterium ulcerans (strain Agy99) protein is Putative S-adenosyl-L-methionine-dependent methyltransferase MUL_4763.